The chain runs to 522 residues: Zinc finger protein 892 (522 aa).

Disordered regions lie at residues 1–22 and 96–124; these read MEPE…GNPK and AASQ…ESAP. Positions 100-116 are enriched in basic and acidic residues; sequence KHWETIPESKELTPEKD. 10 C2H2-type zinc fingers span residues 221–243, 249–271, 277–299, 305–327, 333–355, 361–383, 389–411, 417–439, 445–467, and 473–495; these read WKCN…QRIH, YECN…QRIH, YECH…HIIH, YECN…QVIH, YKCN…QRTH, YECN…QRTH, and YKCK…QKTH.

It belongs to the krueppel C2H2-type zinc-finger protein family.

It localises to the nucleus. Functionally, may be involved in transcriptional regulation. This chain is Zinc finger protein 892, found in Homo sapiens (Human).